Reading from the N-terminus, the 470-residue chain is Probable G-protein coupled receptor 152 (470 aa).

Residues 1-25 form a disordered region; the sequence is MDTTMEADLGATGHRPRTELDDEDS. At 1–33 the chain is on the extracellular side; sequence MDTTMEADLGATGHRPRTELDDEDSYPQGGWDT. Residues 34 to 54 form a helical membrane-spanning segment; it reads VFLVALLLLGLPANGLMAWLA. Topologically, residues 55-65 are cytoplasmic; the sequence is GSQARHGAGTR. The chain crosses the membrane as a helical span at residues 66–86; that stretch reads LALLLLSLALSDFLFLAAAAF. Residues 87 to 105 are Extracellular-facing; it reads QILEIRHGGHWPLGTAACR. Cysteine 104 and cysteine 182 are joined by a disulfide. Residues 106 to 126 form a helical membrane-spanning segment; it reads FYYFLWGVSYSSGLFLLAALS. The Cytoplasmic portion of the chain corresponds to 127–148; sequence LDRCLLALCPHWYPGHRPVRLP. A helical membrane pass occupies residues 149–169; that stretch reads LWVCAGVWVLATLFSVPWLVF. The Extracellular segment spans residues 170–194; it reads PEAAVWWYDLVICLDFWDSEELSLR. A helical membrane pass occupies residues 195-215; sequence MLEVLGGFLPFLLLLVCHVLT. At 216–257 the chain is on the cytoplasmic side; that stretch reads QATACRTCHRQQQPAACRGFARVARTILSAYVVLRLPYQLAQ. Residues 258–278 traverse the membrane as a helical segment; sequence LLYLAFLWDVYSGYLLWEALV. The Extracellular segment spans residues 279 to 281; it reads YSD. The chain crosses the membrane as a helical span at residues 282–302; that stretch reads YLILLNSCLSPFLCLMASADL. The Cytoplasmic segment spans residues 303–470; sequence RTLLRSVLSS…PEAAPGAGPT (168 aa). Residues 322 to 470 form a disordered region; that stretch reads PGSFTPTEPQ…PEAAPGAGPT (149 aa). 2 stretches are compositionally biased toward polar residues: residues 325-335 and 348-414; these read FTPTEPQTQLD and AQSQ…NVQT. Residues 415–425 show a composition bias toward low complexity; the sequence is PAPAASSVPSP.

This sequence belongs to the G-protein coupled receptor 1 family.

The protein resides in the cell membrane. Orphan receptor. This chain is Probable G-protein coupled receptor 152 (GPR152), found in Homo sapiens (Human).